The primary structure comprises 386 residues: 5-amino-6-(D-ribitylamino)uracil--L-tyrosine 4-hydroxyphenyl transferase (386 aa).

Residues V56 to D303 form the Radical SAM core domain. 3 residues coordinate [4Fe-4S] cluster: C70, C74, and C77.

It belongs to the radical SAM superfamily. CofH family. As to quaternary structure, consists of two subunits, CofG and CofH. [4Fe-4S] cluster is required as a cofactor.

It carries out the reaction 5-amino-6-(D-ribitylamino)uracil + L-tyrosine + S-adenosyl-L-methionine = 5-amino-5-(4-hydroxybenzyl)-6-(D-ribitylimino)-5,6-dihydrouracil + 2-iminoacetate + 5'-deoxyadenosine + L-methionine + H(+). It functions in the pathway cofactor biosynthesis; coenzyme F0 biosynthesis. Functionally, catalyzes the radical-mediated synthesis of 5-amino-5-(4-hydroxybenzyl)-6-(D-ribitylimino)-5,6-dihydrouracil from 5-amino-6-(D-ribitylamino)uracil and L-tyrosine. This chain is 5-amino-6-(D-ribitylamino)uracil--L-tyrosine 4-hydroxyphenyl transferase, found in Synechococcus elongatus (strain ATCC 33912 / PCC 7942 / FACHB-805) (Anacystis nidulans R2).